Reading from the N-terminus, the 691-residue chain is ATP-dependent zinc metalloprotease FtsH 2 (691 aa).

The interval 1–48 (MTDEPQSDEQQTTEQERPLGTKRATRADGLRRPGVRSGLAERRSPAAD) is disordered. Residues 1-64 (MTDEPQSDEQ…AAVRRFLLRD (64 aa)) are Cytoplasmic-facing. Residues 14–31 (EQERPLGTKRATRADGLR) show a composition bias toward basic and acidic residues. The helical transmembrane segment at 65 to 85 (VFALGLMIAALVIVILFFTLL) threads the bilayer. At 86 to 168 (GATKPTSSGT…AVKQQPGKAQ (83 aa)) the chain is on the extracellular side. The chain crosses the membrane as a helical span at residues 169-189 (VTIVVQFLLPILLLVCLFALF). Topologically, residues 190-691 (MRIGQDGGAG…ERGSARDRDA (502 aa)) are cytoplasmic. Position 265-272 (265-272 (GPPGTGKT)) interacts with ATP. His-486 serves as a coordination point for Zn(2+). Glu-487 is a catalytic residue. 2 residues coordinate Zn(2+): His-490 and Asp-563.

The protein in the central section; belongs to the AAA ATPase family. In the C-terminal section; belongs to the peptidase M41 family. In terms of assembly, homohexamer. Zn(2+) is required as a cofactor.

It localises to the cell membrane. Its function is as follows. Acts as a processive, ATP-dependent zinc metallopeptidase for both cytoplasmic and membrane proteins. Plays a role in the quality control of integral membrane proteins. The sequence is that of ATP-dependent zinc metalloprotease FtsH 2 from Conexibacter woesei (strain DSM 14684 / CCUG 47730 / CIP 108061 / JCM 11494 / NBRC 100937 / ID131577).